The primary structure comprises 190 residues: Lysozyme g (190 aa).

The span at 1–10 (MPYGKIEDIK) shows a compositional bias: basic and acidic residues. The interval 1–31 (MPYGKIEDIKTSGASDVTAAQDGLKEGGWKS) is disordered. Catalysis depends on residues glutamate 71 and aspartate 84.

The protein belongs to the glycosyl hydrolase 23 family.

It catalyses the reaction Hydrolysis of (1-&gt;4)-beta-linkages between N-acetylmuramic acid and N-acetyl-D-glucosamine residues in a peptidoglycan and between N-acetyl-D-glucosamine residues in chitodextrins.. This is Lysozyme g from Takifugu rubripes (Japanese pufferfish).